A 144-amino-acid polypeptide reads, in one-letter code: Peptide methionine sulfoxide reductase MsrB (144 aa).

A MsrB domain is found at 5 to 127 (KEEKIKSLNR…NSAALRFIPK (123 aa)). Residue cysteine 116 is the Nucleophile of the active site.

The protein belongs to the MsrB Met sulfoxide reductase family.

It catalyses the reaction L-methionyl-[protein] + [thioredoxin]-disulfide + H2O = L-methionyl-(R)-S-oxide-[protein] + [thioredoxin]-dithiol. The chain is Peptide methionine sulfoxide reductase MsrB from Bacillus velezensis (strain DSM 23117 / BGSC 10A6 / LMG 26770 / FZB42) (Bacillus amyloliquefaciens subsp. plantarum).